A 67-amino-acid chain; its full sequence is Large ribosomal subunit protein bL32 (67 aa).

A compositionally biased stretch (basic residues) spans 1-19 (MAVPKRKMSRANTRMRRSQ). Residues 1–22 (MAVPKRKMSRANTRMRRSQWKA) form a disordered region.

This sequence belongs to the bacterial ribosomal protein bL32 family.

The protein is Large ribosomal subunit protein bL32 of Kocuria rhizophila (strain ATCC 9341 / DSM 348 / NBRC 103217 / DC2201).